The primary structure comprises 507 residues: L-amino-acid oxidase (507 aa).

The N-terminal stretch at 1-19 (MNVLFIFSLLFLAALESCA) is a signal peptide. Cys29 and Cys192 are disulfide-bonded. Residues 62–63 (MA), 82–83 (EA), Arg90, and 106–109 (GPMR) contribute to the FAD site. Residue Arg109 participates in substrate binding. 2 N-linked (GlcNAc...) asparagine glycosylation sites follow: Asn191 and Asn213. An FAD-binding site is contributed by Val280. A disulfide bridge connects residues Cys348 and Cys429. N-linked (GlcNAc...) asparagine glycosylation is present at Asn378. Residue Tyr389 participates in substrate binding. FAD-binding positions include Glu473 and 480-485 (GWIDST).

Belongs to the flavin monoamine oxidase family. FIG1 subfamily. In terms of assembly, homodimer; non-covalently linked. The cofactor is FAD. In terms of tissue distribution, expressed by the venom gland.

The protein resides in the secreted. It catalyses the reaction an L-alpha-amino acid + O2 + H2O = a 2-oxocarboxylate + H2O2 + NH4(+). It carries out the reaction L-leucine + O2 + H2O = 4-methyl-2-oxopentanoate + H2O2 + NH4(+). In terms of biological role, catalyzes an oxidative deamination of predominantly hydrophobic and aromatic L-amino acids, thus producing hydrogen peroxide that may contribute to the diverse toxic effects of this enzyme. Shows activity on L-Leu. Exhibits diverse biological activities, such as hemorrhage, hemolysis, edema, apoptosis of vascular endothelial cells or tumor cell lines, antibacterial and antiparasitic activities. This protein induces platelet aggregation by both hydrogen peroxide production and binding to platelet membrane proteins (that would enhance the sensitivity of platelets to hydrogen peroxide). Effects of snake L-amino oxidases on platelets are controversial, since they either induce aggregation or inhibit agonist-induced aggregation. These different effects are probably due to different experimental conditions. This chain is L-amino-acid oxidase, found in Naja atra (Chinese cobra).